We begin with the raw amino-acid sequence, 144 residues long: Large ribosomal subunit protein uL15 (144 aa).

The interval 1–53 is disordered; it reads MRLNTLSPAEGAKHAPKRVGRGIGSGLGKTAGRGHKGQNSRSGGGVRRGFEGG. Positions 21-31 are enriched in gly residues; that stretch reads RGIGSGLGKTA.

Belongs to the universal ribosomal protein uL15 family. As to quaternary structure, part of the 50S ribosomal subunit.

Binds to the 23S rRNA. The protein is Large ribosomal subunit protein uL15 of Serratia proteamaculans (strain 568).